A 370-amino-acid polypeptide reads, in one-letter code: UDP-N-acetylglucosamine--N-acetylmuramyl-(pentapeptide) pyrophosphoryl-undecaprenol N-acetylglucosamine transferase (370 aa).

UDP-N-acetyl-alpha-D-glucosamine contacts are provided by residues 10 to 12, Asn126, Ser200, Ile255, and Gln300; that span reads TGG.

It belongs to the glycosyltransferase 28 family. MurG subfamily.

The protein resides in the cell membrane. The enzyme catalyses Mur2Ac(oyl-L-Ala-gamma-D-Glu-L-Lys-D-Ala-D-Ala)-di-trans,octa-cis-undecaprenyl diphosphate + UDP-N-acetyl-alpha-D-glucosamine = beta-D-GlcNAc-(1-&gt;4)-Mur2Ac(oyl-L-Ala-gamma-D-Glu-L-Lys-D-Ala-D-Ala)-di-trans,octa-cis-undecaprenyl diphosphate + UDP + H(+). It participates in cell wall biogenesis; peptidoglycan biosynthesis. Functionally, cell wall formation. Catalyzes the transfer of a GlcNAc subunit on undecaprenyl-pyrophosphoryl-MurNAc-pentapeptide (lipid intermediate I) to form undecaprenyl-pyrophosphoryl-MurNAc-(pentapeptide)GlcNAc (lipid intermediate II). The sequence is that of UDP-N-acetylglucosamine--N-acetylmuramyl-(pentapeptide) pyrophosphoryl-undecaprenol N-acetylglucosamine transferase from Lactobacillus gasseri (strain ATCC 33323 / DSM 20243 / BCRC 14619 / CIP 102991 / JCM 1131 / KCTC 3163 / NCIMB 11718 / NCTC 13722 / AM63).